A 422-amino-acid chain; its full sequence is MYKFRIQGSDKPLSGEVTISGAKNAALPILFASLLAEEPVEVANVPKLRDVDTTMELLKRLGAEVSRNGSVHIDASGVNDFCAPYDLVKTMRASIWALGPLVARFGKGQVSLPGGCAIGARPVDLHIHGLEQLGATIKLEEGYVKAEVDGRLKGAHIVMDKVSVGATITVMCAATLAEGTTVLENAAREPEIVDTANFLNAIGAKVSGMGTDTITIEGVERLGGGYHEVVADRIETGTFLVAAAVSGGKIVCKNTKAHLLEAVLAKLEEAGADVQTGDDWISLDMTGRELKAVNIRTAPHPAFPTDMQAQFTLLNMMAKGSGIITETIFENRFMHIPELQRMGAHAEIEGNTAICGDTDGLSGAQVMATDLRASASLVIAGCIAKGETIVDRIYHIARGYDKIEDKLTALGANIERVHSDDL.

Position 23–24 (23–24 (KN)) interacts with phosphoenolpyruvate. Arg92 is a UDP-N-acetyl-alpha-D-glucosamine binding site. Cys116 (proton donor) is an active-site residue. Cys116 carries the post-translational modification 2-(S-cysteinyl)pyruvic acid O-phosphothioketal. UDP-N-acetyl-alpha-D-glucosamine contacts are provided by residues 121–125 (RPVDL), 161–164 (KVSV), Asp306, and Ile328.

Belongs to the EPSP synthase family. MurA subfamily.

The protein localises to the cytoplasm. The catalysed reaction is phosphoenolpyruvate + UDP-N-acetyl-alpha-D-glucosamine = UDP-N-acetyl-3-O-(1-carboxyvinyl)-alpha-D-glucosamine + phosphate. It functions in the pathway cell wall biogenesis; peptidoglycan biosynthesis. Functionally, cell wall formation. Adds enolpyruvyl to UDP-N-acetylglucosamine. The polypeptide is UDP-N-acetylglucosamine 1-carboxyvinyltransferase (Aliivibrio fischeri (strain ATCC 700601 / ES114) (Vibrio fischeri)).